The chain runs to 73 residues: Large ribosomal subunit protein uL29 (73 aa).

Belongs to the universal ribosomal protein uL29 family.

This is Large ribosomal subunit protein uL29 (rpmC) from Synechocystis sp. (strain ATCC 27184 / PCC 6803 / Kazusa).